We begin with the raw amino-acid sequence, 1073 residues long: Activated Cdc42 kinase Ack (1073 aa).

The tract at residues 88–110 (IGGGKQPSSKKQSSAARESSQGN) is disordered. In terms of domain architecture, Protein kinase spans 123–383 (ITMGLKLGDG…PTFAALKEYL (261 aa)). Residues 129–137 (LGDGSFGVV) and lysine 156 each bind ATP. Residue aspartate 250 is the Proton acceptor of the active site. The SH3 domain occupies 386–446 (MSPPVMRASR…PRNLLEQRKV (61 aa)). 3 disordered regions span residues 484–506 (QRKCASMTNQPHAKERKSTSSKQ), 803–834 (PLKNGAAPGSVHSNHSSPSSTASPKQNNVEAA), and 862–882 (AQPPTEQAEEQIYQNHRHQQQ). Residues 812 to 826 (SVHSNHSSPSSTASP) show a composition bias toward low complexity. The UBA domain maps to 1029 to 1072 (GLATRHYKIDQLARLGVAGRPQCEQALQQTNWSLEVAAELLLNA).

Belongs to the protein kinase superfamily. Tyr protein kinase family. As to quaternary structure, interacts with yki and ex. Interacts with drk. Likely to be a member of an axonal guidance receptor complex that includes SH3PX1, dock and Dscam. Interacts (via N-terminus) with dock. Interacts with SH3PX1 (via SH3 domain). It depends on Mg(2+) as a cofactor. Phosphorylated. Autophosphorylated. In terms of tissue distribution, detected in ovaries (at protein level). In adults, relatively higher expression in the head compared to the body.

The protein resides in the cytoplasm. It localises to the cytoplasmic vesicle. Its subcellular location is the clathrin-coated vesicle. It carries out the reaction L-tyrosyl-[protein] + ATP = O-phospho-L-tyrosyl-[protein] + ADP + H(+). The catalysed reaction is L-threonyl-[protein] + ATP = O-phospho-L-threonyl-[protein] + ADP + H(+). Non-receptor tyrosine-protein and serine/threonine-protein kinase that is implicated in diverse biological functions such as cell survival, cell differentiation, cell growth and proliferation. Phosphorylates SH3PX1 and ex. Phosphorylates SH3PX1 predominantly on 'Tyr-56', which likely promotes the recruitment of SH3PX1 to an axonal guidance receptor complex that includes dock and Dscam; because phosphorylation of SH3PX1 increases its interaction with the complex member dock while decreasing its interaction with the actin cytoskeleton modulator WASp. In the wing and eye, promotes tissue growth, and during embryogenesis coordinates cell shape changes required for correct dorsal closure. Functions in the negative regulation of the Hippo/SWH (Sav/Wts/Hpo) signaling pathway by enhancing yki activity thereby promoting cell proliferation and inhibiting apoptosis. This is accomplished, at least in part, by phosphorylating ex thereby reducing its ability to efficiently activate the Hippo signaling cascade. In the eye disk, wing disk and possibly spermatids, inhibits programmed cell death induced by hid and rpr through a mechanism that is independent of the MAP kinase signal transduction pathway. Essential for male and female fertility. During oogenesis required for the correct temporal assembly, and consequently the catalytic activity of long Ctps filaments (cytoophidium) in the germline nurse cells, likely by phosphorylating an unidentified substrate that is essential for linking individual Ctps filaments into large, catalytically active assemblies. The polypeptide is Activated Cdc42 kinase Ack (Drosophila melanogaster (Fruit fly)).